A 1040-amino-acid chain; its full sequence is Multidrug resistance protein MdtB (1040 aa).

The next 12 membrane-spanning stretches (helical) occupy residues F16–I36, L347–A367, I369–L389, L396–I416, I440–F460, F472–P492, W537–I557, L863–I883, F888–A908, I911–V931, I968–V988, and I998–I1018.

This sequence belongs to the resistance-nodulation-cell division (RND) (TC 2.A.6) family. MdtB subfamily. In terms of assembly, part of a tripartite efflux system composed of MdtA, MdtB and MdtC. MdtB forms a heteromultimer with MdtC.

It is found in the cell inner membrane. Functionally, the MdtABC tripartite complex confers resistance against novobiocin and deoxycholate. This chain is Multidrug resistance protein MdtB, found in Escherichia coli O7:K1 (strain IAI39 / ExPEC).